Consider the following 131-residue polypeptide: MRVGVPPQIPRPSLNSAPSPFNPQGQSQITDPRQAQSPPPWSYDQSYPSYLSQMTSPSIHSTTPLSSTRGTGLPVITDVPRRISGASELGPFSDPRQFPSISSLTESRFSNPRMHYPATFTYTPPVTSGMS.

Residues 1–10 (MRVGVPPQIP) form the Runt domain. The interval 1 to 75 (MRVGVPPQIP…SSTRGTGLPV (75 aa)) is disordered. At arginine 11 the chain carries Asymmetric dimethylarginine. Polar residues-rich tracts occupy residues 13–36 (SLNS…RQAQ) and 43–70 (YDQS…STRG).

As to quaternary structure, heterodimer of an alpha and a beta subunit. The alpha subunit binds DNA as a monomer and through the Runt domain. DNA-binding is increased by heterodimerization. Interacts with XRCC6 (Ku70) and XRCC5 (Ku80). Interacts with CCNB1, KAT6A and KAT6B. Interacts with HIVEP3. Interacts with IFI204. Interaction with SATB2; the interaction results in enhanced DNA binding and transactivation by these transcription factors. Binds to HIPK3. Interacts with FOXO1 (via a C-terminal region); the interaction inhibits RUNX2 transcriptional activity towards BGLAP. This interaction is prevented on insulin or IGF1 stimulation as FOXO1 is exported from the nucleus. Interacts with FOXP3. Interacts with TMEM119. Interacts with OLFM2. Interacts with IPO7; the interaction inhibits RUNX2 nuclear translocation in osteoblasts. Phosphorylated; probably by MAP kinases (MAPK). Phosphorylation by HIPK3 is required for the SPEN/MINT and FGF2 transactivation during osteoblastic differentiation.

The protein resides in the nucleus. It localises to the cytoplasm. In terms of biological role, transcription factor involved in osteoblastic differentiation and skeletal morphogenesis. Essential for the maturation of osteoblasts and both intramembranous and endochondral ossification. CBF binds to the core site, 5'-PYGPYGGT-3', of a number of enhancers and promoters, including murine leukemia virus, polyomavirus enhancer, T-cell receptor enhancers, osteocalcin, osteopontin, bone sialoprotein, alpha 1(I) collagen, LCK, IL-3 and GM-CSF promoters. Inhibits KAT6B-dependent transcriptional activation. In osteoblasts, supports transcription activation: synergizes with SPEN/MINT to enhance FGFR2-mediated activation of the osteocalcin FGF-responsive element (OCFRE). This is Runt-related transcription factor 2 (RUNX2) from Equus caballus (Horse).